The following is a 131-amino-acid chain: Cruxhalorhodopsin-1 (131 aa).

Residues 1-11 traverse the membrane as a helical segment; sequence PMILLALGLLA. Topologically, residues 12–14 are cytoplasmic; the sequence is DTD. Residues 15 to 38 form a helical membrane-spanning segment; that stretch reads IASLFTAITMDIGMCVTGLAAALI. The Extracellular segment spans residues 39–41; that stretch reads TSS. The helical transmembrane segment at 42-64 threads the bilayer; it reads HLLRWVFYGISCAFFVAVLYVLL. Over 65 to 76 the chain is Cytoplasmic; sequence VQWPADAEAAGT. A helical transmembrane segment spans residues 77–100; sequence SEIFGTLKILTVVLWLGYPILWAL. Topologically, residues 101–109 are extracellular; sequence GSEGVALLS. Residues 110 to 131 form a helical membrane-spanning segment; it reads VGVTSWGYSGLDILAKYVFAFI. Position 125 is an N6-(retinylidene)lysine (Lys-125).

It belongs to the archaeal/bacterial/fungal opsin family.

Its subcellular location is the cell membrane. In terms of biological role, light-driven chloride pump. The sequence is that of Cruxhalorhodopsin-1 (choP1) from Haloarcula argentinensis.